Consider the following 61-residue polypeptide: Large ribosomal subunit protein uL29 (61 aa).

The protein belongs to the universal ribosomal protein uL29 family.

The polypeptide is Large ribosomal subunit protein uL29 (Campylobacter jejuni subsp. jejuni serotype O:6 (strain 81116 / NCTC 11828)).